The following is a 253-amino-acid chain: Acetylglutamate kinase (253 aa).

Residues 37–38, Arg59, and Asn149 each bind substrate; that span reads GG.

It belongs to the acetylglutamate kinase family. ArgB subfamily.

The protein localises to the cytoplasm. The enzyme catalyses N-acetyl-L-glutamate + ATP = N-acetyl-L-glutamyl 5-phosphate + ADP. It participates in amino-acid biosynthesis; L-arginine biosynthesis; N(2)-acetyl-L-ornithine from L-glutamate: step 2/4. Catalyzes the ATP-dependent phosphorylation of N-acetyl-L-glutamate. In Rubrobacter xylanophilus (strain DSM 9941 / JCM 11954 / NBRC 16129 / PRD-1), this protein is Acetylglutamate kinase.